The primary structure comprises 1653 residues: MPRAPPSGPTTAPGREDDARGLRKRSRRPGLGEAGGCGPEAEGLEESRQKRRMVARASGREEVESDKSAKEKRKVTEASSDDPQPGIDLVRKESLTSSESFPTVECSEFQSMAFLQSLGKERLVEGIKRRIRIKKCKSLESPALKMTENKATQNSKVEFQDELYKNTLKYSCNSLSPGVENNSVLKLHDCSCLSHSKDCNDENNLAYKPDGGCMHVPENSSKSKKENPRSLIDKTDPSNIPQLLQTEENVMRVSQLLLEENDSYLSKNNGLFSCLQSEKTKHSIEESSIGRKSRKRMKVSEKGNGMVIEMKFSNMCNKSELMLQGNQTGADGKETEILEAKKSSLKVLRKVNNNTLSPMDPLLSLPETGKKTSPEHCANAVFQKALEQLSKEETKNVSQPLGCTSMDPPEDYFKSMKNSLVKSLSDCFPIEKRSSRESLKNEAEESKYSCQRTIPMTGKRTWPCYSCARISAQCWKKASLPQSSRQDDFLKHQMNQTHLTDSKLMLQSSVTETNSASSSIEKLDSNLNCLPSVSTVEPTSVVIKEPIVNDDEKMKSEELSRSASEVVSNTTEDTSLTNMTHNLTGSKKKDRGNLTKLNLTVASQDGQEANNSTSKTVHRKACITKQALVVPDLVKILNTGRLTNFKIPLLKNKTEKRKEINAKSSEREVYSPLELLDSVSGAEVRQSRTKENAVTVTSGPQSLSIQRSVIPVQASSDSFCSKNSCIIAPSFLKQGNNKQPSNHISASGRIISNNAAGSLTVENNTFSCDPGCIEKNPTFYSNEQEPFKAVSSEVSGRKMTENFSEIKVGFPDILKAYEDDVLLIDVIQDDPDLFGVSNEGELSFPSEVPMISQEPNVAEEHQSTDSKHMELPDKKEPSNALRELPVPDPGSMKSEICASLSAASEIKHDSKDANISLGEVTHETSSNEKPRGLSEQTKSSDLDEKCRFSDKVAIREEKETISEVCRRDSKNTEIMVGECHLAALVSKPLCLPVPLPPLNLNAHQEDTLLNPQMNDFRLPGKHSVLKLQNPEICEIFKREKNVGVFQKPLGLMIPHRYCKFHFNTLRGCERSQCKFGHVPEQGDEKVCMDVFKKYISINELCLLQRAANMFMEYYRKFLPGIHFDLQVLNDLLSSLLKHCLLKEVFQVMNLCIMIKMLPALKILLKIFEYVATMKLRNAVPALINIFCKLLEAGMVLDPEHFNYIVKLLYQVQASKQEITAVLEMKSRLHMRQFKKNWKCDLEAALNEIEHCKEKGDWTKLGNVYLNIKMSCEKFADFQRFCACIAETLTKDCKEERPGVPFCEFAETVSKDLQNSEVDKTLLGRIGISAMYFYHKLLQWSKGRKVLDKLYELKIHFTSLKGLIGPEKLAPRCQIVNIAAEIFLKSGSLDGAIWVLRESEWIINTPVWPCDRLDVLNRHNLLCTIAHEILAKSLYRQTFEVLQNLPGFQNSQETVEVSQYSLLFNKLLDACIESNSLGMSSSVAEFMISKSIPIDFSFLRRLITSLGRSCLWLKARAHYKSALSLGCYPPLEGNLYRKLLLIPSYLSEIEMLLAIEIFLVSNASSIQSPGTSTQMLQIVLKRSEENKSRSKDDYQAAVERLITAARISDPKLFIKHMTVNVNKEQVYSLEQCSALKWLKENMKWAGKVWLFNNH.

5 disordered regions span residues 1–88 (MPRA…PGID), 212–238 (GCMH…TDPS), 553–591 (KMKS…KKDR), 855–893 (PNVA…GSMK), and 919–942 (EVTH…SSDL). Basic and acidic residues-rich tracts occupy residues 58 to 69 (SGREEVESDKSA) and 221 to 236 (SKSK…DKTD). Positions 561-585 (RSASEVVSNTTEDTSLTNMTHNLTG) are enriched in polar residues. Composition is skewed to basic and acidic residues over residues 858–877 (AEEH…KKEP) and 920–942 (VTHE…SSDL).

The protein localises to the cytoplasm. Its subcellular location is the cytosol. In terms of biological role, important for normal spermatogenesis and male fertility. Specifically required for progression to the post-meiotic stages of spermatocyte development. Seems to be necessary for normal expression levels of a number of testis-expressed gene transcripts, although its role in this process is unclear. This is Protein TOPAZ1 (TOPAZ1) from Bos taurus (Bovine).